The chain runs to 139 residues: Succinate dehydrogenase assembly factor 2, mitochondrial (139 aa).

A mitochondrion-targeting transit peptide spans 1-28 (MLRKTNLSNITTLLRSARCMNRMPQLRF).

This sequence belongs to the SDHAF2 family. Interacts with the flavoprotein subunit within the SDH catalytic dimer.

It localises to the mitochondrion. The protein resides in the mitochondrion matrix. Plays an essential role in the assembly of succinate dehydrogenase (SDH), an enzyme complex (also referred to as respiratory complex II) that is a component of both the tricarboxylic acid (TCA) cycle and the mitochondrial electron transport chain, and which couples the oxidation of succinate to fumarate with the reduction of ubiquinone (coenzyme Q) to ubiquinol. Required for flavinylation (covalent attachment of FAD) of the flavoprotein subunit of the SDH catalytic dimer. This chain is Succinate dehydrogenase assembly factor 2, mitochondrial, found in Schizosaccharomyces pombe (strain 972 / ATCC 24843) (Fission yeast).